Here is a 435-residue protein sequence, read N- to C-terminus: ATP-dependent protease ATPase subunit HslU (435 aa).

ATP is bound by residues Val18, 60–65, Asp248, Glu313, and Arg385; that span reads GVGKTE.

It belongs to the ClpX chaperone family. HslU subfamily. In terms of assembly, a double ring-shaped homohexamer of HslV is capped on each side by a ring-shaped HslU homohexamer. The assembly of the HslU/HslV complex is dependent on binding of ATP.

It is found in the cytoplasm. Functionally, ATPase subunit of a proteasome-like degradation complex; this subunit has chaperone activity. The binding of ATP and its subsequent hydrolysis by HslU are essential for unfolding of protein substrates subsequently hydrolyzed by HslV. HslU recognizes the N-terminal part of its protein substrates and unfolds these before they are guided to HslV for hydrolysis. This chain is ATP-dependent protease ATPase subunit HslU, found in Xanthobacter autotrophicus (strain ATCC BAA-1158 / Py2).